Here is a 218-residue protein sequence, read N- to C-terminus: Protein-L-isoaspartate O-methyltransferase (218 aa).

Ser-63 is an active-site residue.

It belongs to the methyltransferase superfamily. L-isoaspartyl/D-aspartyl protein methyltransferase family.

Its subcellular location is the cytoplasm. It carries out the reaction [protein]-L-isoaspartate + S-adenosyl-L-methionine = [protein]-L-isoaspartate alpha-methyl ester + S-adenosyl-L-homocysteine. Catalyzes the methyl esterification of L-isoaspartyl residues in peptides and proteins that result from spontaneous decomposition of normal L-aspartyl and L-asparaginyl residues. It plays a role in the repair and/or degradation of damaged proteins. The polypeptide is Protein-L-isoaspartate O-methyltransferase (Syntrophus aciditrophicus (strain SB)).